Consider the following 223-residue polypeptide: Small ribosomal subunit protein uS5 (223 aa).

The segment at 1-66 is disordered; sequence MPPQQQRGRG…AERAQAETEF (66 aa). The segment covering 13 to 22 has biased composition (gly residues); it reads RGPGGPGGPG. Residues 53 to 66 are compositionally biased toward basic and acidic residues; the sequence is GGDKAERAQAETEF. Positions 66–129 constitute an S5 DRBM domain; the sequence is FQERVVQIRR…SDARKALIRV (64 aa).

This sequence belongs to the universal ribosomal protein uS5 family. In terms of assembly, part of the 30S ribosomal subunit. Contacts proteins S4 and S8.

Functionally, with S4 and S12 plays an important role in translational accuracy. Its function is as follows. Located at the back of the 30S subunit body where it stabilizes the conformation of the head with respect to the body. This is Small ribosomal subunit protein uS5 from Gloeobacter violaceus (strain ATCC 29082 / PCC 7421).